A 181-amino-acid polypeptide reads, in one-letter code: Probable Brix domain-containing ribosomal biogenesis protein (181 aa).

In terms of domain architecture, Brix spans 5–181 (CKVIITTSRE…RIKKVVYRHV (177 aa)).

Functionally, probably involved in the biogenesis of the ribosome. The sequence is that of Probable Brix domain-containing ribosomal biogenesis protein from Pyrobaculum aerophilum (strain ATCC 51768 / DSM 7523 / JCM 9630 / CIP 104966 / NBRC 100827 / IM2).